The sequence spans 334 residues: Protein-methionine-sulfoxide reductase catalytic subunit MsrP (334 aa).

Residues 1 to 44 (MKKIRPLTEADVTAESAFFMQRRQVLKALGISAAALSLPSTAQA) constitute a signal peptide (tat-type signal). Residues asparagine 88, 91–92 (YE), cysteine 146, threonine 181, asparagine 233, arginine 238, and 249–251 (GIK) each bind Mo-molybdopterin.

The protein belongs to the MsrP family. Heterodimer of a catalytic subunit (MsrP) and a heme-binding subunit (MsrQ). It depends on Mo-molybdopterin as a cofactor. Post-translationally, predicted to be exported by the Tat system. The position of the signal peptide cleavage has not been experimentally proven.

The protein localises to the periplasm. It carries out the reaction L-methionyl-[protein] + a quinone + H2O = L-methionyl-(S)-S-oxide-[protein] + a quinol. It catalyses the reaction L-methionyl-[protein] + a quinone + H2O = L-methionyl-(R)-S-oxide-[protein] + a quinol. Functionally, part of the MsrPQ system that repairs oxidized periplasmic proteins containing methionine sulfoxide residues (Met-O), using respiratory chain electrons. Thus protects these proteins from oxidative-stress damage caused by reactive species of oxygen and chlorine generated by the host defense mechanisms. MsrPQ is essential for the maintenance of envelope integrity under bleach stress, rescuing a wide series of structurally unrelated periplasmic proteins from methionine oxidation, including the primary periplasmic chaperone SurA and the lipoprotein Pal. The catalytic subunit MsrP is non-stereospecific, being able to reduce both (R-) and (S-) diastereoisomers of methionine sulfoxide. The chain is Protein-methionine-sulfoxide reductase catalytic subunit MsrP from Salmonella dublin (strain CT_02021853).